We begin with the raw amino-acid sequence, 22 residues long: Piscidin-3 (22 aa).

Gly22 carries the post-translational modification Glycine amide.

It belongs to the pleurocidin family. As to expression, mast cells in gill, skin and gut, and in lining blood vessels in the viscera.

The protein localises to the secreted. It is found in the membrane. In terms of biological role, antimicrobial peptide with broad-spectrum activity against Gram-positive and Gram-negative bacteria. Rapidly inactivates both channel catfish herpesvirus (ED(50)=11 uM) and frog virus 3 (ED(50)=16 uM) over a wide temperature range. Has hemolytic activity. This chain is Piscidin-3, found in Morone chrysops x Morone saxatilis (White bass x Striped bass).